We begin with the raw amino-acid sequence, 218 residues long: Riboflavin synthase (218 aa).

Lumazine-binding repeat units follow at residues 1–97 (MFTG…FGGH) and 98–194 (IVSG…ERLL). 2,4-dihydroxypteridine-binding positions include 4 to 6 (GII), 48 to 50 (CLT), 62 to 67 (DLSIET), 101 to 103 (GHV), Lys-136, 145 to 147 (SLT), and 159 to 164 (TIVPHT).

As to quaternary structure, homotrimer.

It carries out the reaction 2 6,7-dimethyl-8-(1-D-ribityl)lumazine + H(+) = 5-amino-6-(D-ribitylamino)uracil + riboflavin. It participates in cofactor biosynthesis; riboflavin biosynthesis; riboflavin from 2-hydroxy-3-oxobutyl phosphate and 5-amino-6-(D-ribitylamino)uracil: step 2/2. Catalyzes the dismutation of two molecules of 6,7-dimethyl-8-ribityllumazine, resulting in the formation of riboflavin and 5-amino-6-(D-ribitylamino)uracil. In Photobacterium phosphoreum, this protein is Riboflavin synthase.